Reading from the N-terminus, the 441-residue chain is GTPase Der (441 aa).

2 consecutive EngA-type G domains span residues 4–169 and 178–353; these read PVVA…PEDI and IKVA…DQAA. GTP is bound by residues 10–17, 57–61, 120–123, 184–191, 231–235, and 296–299; these read GRPNVGKS, DTGGI, NKVD, GKPNAGKS, DTAGI, and NKWD. The KH-like domain occupies 354-438; sequence FRISTGMLND…PIRFIHRQRE (85 aa).

Belongs to the TRAFAC class TrmE-Era-EngA-EngB-Septin-like GTPase superfamily. EngA (Der) GTPase family. In terms of assembly, associates with the 50S ribosomal subunit.

GTPase that plays an essential role in the late steps of ribosome biogenesis. In Ruminiclostridium cellulolyticum (strain ATCC 35319 / DSM 5812 / JCM 6584 / H10) (Clostridium cellulolyticum), this protein is GTPase Der.